The primary structure comprises 130 residues: Sulfurtransferase TusD (130 aa).

The active-site Cysteine persulfide intermediate is the Cys78.

It belongs to the DsrE/TusD family. Heterohexamer, formed by a dimer of trimers. The hexameric TusBCD complex contains 2 copies each of TusB, TusC and TusD. The TusBCD complex interacts with TusE.

Its subcellular location is the cytoplasm. Its function is as follows. Part of a sulfur-relay system required for 2-thiolation of 5-methylaminomethyl-2-thiouridine (mnm(5)s(2)U) at tRNA wobble positions. Accepts sulfur from TusA and transfers it in turn to TusE. The protein is Sulfurtransferase TusD of Buchnera aphidicola subsp. Baizongia pistaciae (strain Bp).